The primary structure comprises 163 residues: NADH-quinone oxidoreductase subunit I (163 aa).

4Fe-4S ferredoxin-type domains follow at residues 53–83 and 94–123; these read LRRY…IEAG and VRYD…EGPN. The [4Fe-4S] cluster site is built by Cys-63, Cys-66, Cys-69, Cys-73, Cys-103, Cys-106, Cys-109, and Cys-113.

It belongs to the complex I 23 kDa subunit family. NDH-1 is composed of 14 different subunits. Subunits NuoA, H, J, K, L, M, N constitute the membrane sector of the complex. [4Fe-4S] cluster serves as cofactor.

Its subcellular location is the cell inner membrane. The catalysed reaction is a quinone + NADH + 5 H(+)(in) = a quinol + NAD(+) + 4 H(+)(out). Functionally, NDH-1 shuttles electrons from NADH, via FMN and iron-sulfur (Fe-S) centers, to quinones in the respiratory chain. The immediate electron acceptor for the enzyme in this species is believed to be ubiquinone. Couples the redox reaction to proton translocation (for every two electrons transferred, four hydrogen ions are translocated across the cytoplasmic membrane), and thus conserves the redox energy in a proton gradient. This Bartonella tribocorum (strain CIP 105476 / IBS 506) protein is NADH-quinone oxidoreductase subunit I.